The primary structure comprises 200 residues: Small ribosomal subunit protein uS4 (200 aa).

In terms of domain architecture, S4 RNA-binding spans 94–157 (SRLDNLVFRA…QTSPQVKDAV (64 aa)).

The protein belongs to the universal ribosomal protein uS4 family. Part of the 30S ribosomal subunit. Contacts protein S5. The interaction surface between S4 and S5 is involved in control of translational fidelity.

In terms of biological role, one of the primary rRNA binding proteins, it binds directly to 16S rRNA where it nucleates assembly of the body of the 30S subunit. Functionally, with S5 and S12 plays an important role in translational accuracy. This is Small ribosomal subunit protein uS4 from Metamycoplasma arthritidis (strain 158L3-1) (Mycoplasma arthritidis).